Consider the following 151-residue polypeptide: Cytochrome c-type biogenesis protein CcmE 2 (151 aa).

The Cytoplasmic portion of the chain corresponds to 1–8 (MNPLRKKR). The helical; Signal-anchor for type II membrane protein transmembrane segment at 9 to 29 (LVIILAILVGVGAAVGLALSA) threads the bilayer. Residues 30–151 (LQQNINLFYT…QSAPAPGKEG (122 aa)) lie on the Periplasmic side of the membrane. Residues H124 and Y128 each coordinate heme.

Belongs to the CcmE/CycJ family.

The protein localises to the cell inner membrane. Its function is as follows. Heme chaperone required for the biogenesis of c-type cytochromes. Transiently binds heme delivered by CcmC and transfers the heme to apo-cytochromes in a process facilitated by CcmF and CcmH. This chain is Cytochrome c-type biogenesis protein CcmE 2, found in Pseudomonas fluorescens (strain Pf0-1).